Here is a 625-residue protein sequence, read N- to C-terminus: Vacuolar-sorting receptor 2 (625 aa).

Residues 1–19 form the signal peptide; it reads MRTTNVWLVVIVWVTVGWS. Residues 20–567 lie on the Lumenal side of the membrane; it reads SCTGRFVVEK…INRDARGDFS (548 aa). The PA domain occupies 55 to 167; that stretch reads QYGGSMSGAV…SLGSAIKTAI (113 aa). N-linked (GlcNAc...) asparagine glycans are attached at residues Asn147, Asn293, and Asn433. EGF-like domains follow at residues 415–465 and 468–515; these read ETNE…THCE and GALR…KECK. Disulfide bonds link Cys419–Cys437, Cys426–Cys446, Cys448–Cys464, Cys472–Cys492, Cys479–Cys500, Cys502–Cys514, and Cys544–Cys557. An EGF-like 3; calcium-binding domain is found at 516–558; sequence DVNECEEKTACQCRDCKCKNTWGSYECSCSGSLLYIREHDICI. Residues 568-588 traverse the membrane as a helical segment; sequence WGVIWIIIMGLGAAALGAYTV. The Cytoplasmic portion of the chain corresponds to 589–625; sequence YKYRIRTYMDSEIRAIMAQYMPLDNNPNTQLSSQLEL. The short motif at 608–611 is the Tyrosine-based internalization motif element; the sequence is YMPL.

Belongs to the VSR (BP-80) family. As to expression, expressed only in flowers.

Its subcellular location is the membrane. The protein resides in the golgi apparatus membrane. It is found in the cytoplasmic vesicle. It localises to the clathrin-coated vesicle membrane. The protein localises to the prevacuolar compartment membrane. In terms of biological role, vacuolar-sorting receptor (VSR) involved in clathrin-coated vesicles sorting from Golgi apparatus to vacuoles. The protein is Vacuolar-sorting receptor 2 of Arabidopsis thaliana (Mouse-ear cress).